The sequence spans 557 residues: Protein NRT1/ PTR FAMILY 2.6 (557 aa).

The next 12 membrane-spanning stretches (helical) occupy residues 26-46 (ITFP…LGWL), 67-87 (ILNI…IAAD), 89-109 (FFGT…GVVL), 136-156 (NIQL…AGGL), 177-197 (FFNW…TAIV), 203-223 (ISWS…LIVF), 318-338 (IIPL…QLGL), 356-376 (IPAG…IIVN), 398-418 (VGIG…VEAK), 439-459 (VLWL…HFPG), 478-498 (SITS…IDLI), and 518-538 (YWIL…CSWF).

This sequence belongs to the major facilitator superfamily. Proton-dependent oligopeptide transporter (POT/PTR) (TC 2.A.17) family. In terms of tissue distribution, expressed in roots.

The protein localises to the membrane. Its function is as follows. Transporter involved in a passive nitrate efflux. The protein is Protein NRT1/ PTR FAMILY 2.6 (NPF2.6) of Arabidopsis thaliana (Mouse-ear cress).